A 321-amino-acid chain; its full sequence is Probable E3 ubiquitin-protein ligase BAH1-like 1 (321 aa).

The 149-residue stretch at 1–149 folds into the SPX domain; sequence MKFAKKYEKY…YSKQGQEFKA (149 aa). Residues 217–266 form an RING-type zinc finger; it reads CSICLDTVFDPVALSCGHIYCYLCSCSAASVTIVDGLKSAERKSKCPLCR.

It belongs to the RING-type zinc finger family.

The enzyme catalyses S-ubiquitinyl-[E2 ubiquitin-conjugating enzyme]-L-cysteine + [acceptor protein]-L-lysine = [E2 ubiquitin-conjugating enzyme]-L-cysteine + N(6)-ubiquitinyl-[acceptor protein]-L-lysine.. It participates in protein modification; protein ubiquitination. This Oryza sativa subsp. indica (Rice) protein is Probable E3 ubiquitin-protein ligase BAH1-like 1.